The following is a 230-amino-acid chain: Demethylmenaquinone methyltransferase (230 aa).

Residues Thr-57, Asp-77, 101 to 102 (DI), and Ser-118 contribute to the S-adenosyl-L-methionine site.

It belongs to the class I-like SAM-binding methyltransferase superfamily. MenG/UbiE family.

It carries out the reaction a 2-demethylmenaquinol + S-adenosyl-L-methionine = a menaquinol + S-adenosyl-L-homocysteine + H(+). The protein operates within quinol/quinone metabolism; menaquinone biosynthesis; menaquinol from 1,4-dihydroxy-2-naphthoate: step 2/2. In terms of biological role, methyltransferase required for the conversion of demethylmenaquinol (DMKH2) to menaquinol (MKH2). The chain is Demethylmenaquinone methyltransferase from Chlamydia felis (strain Fe/C-56) (Chlamydophila felis).